The primary structure comprises 560 residues: Thermosome subunit alpha (560 aa).

Residues Ser535 to Ser547 are compositionally biased toward basic and acidic residues. The tract at residues Ser535–Asp560 is disordered.

This sequence belongs to the TCP-1 chaperonin family. Forms a heterooligomeric complex of two stacked nine-membered rings; one of alpha and the other of beta subunits. Sometimes called a 'rosettasome'.

It localises to the cytoplasm. It catalyses the reaction ATP + H2O = ADP + phosphate + H(+). Functionally, molecular chaperone; binds unfolded polypeptides in vitro, stimulates protein folding and has ATPase activity. One of the most abundant proteins in the cell at all temperatures. This is Thermosome subunit alpha (thsA) from Saccharolobus shibatae (strain ATCC 51178 / DSM 5389 / JCM 8931 / NBRC 15437 / B12) (Sulfolobus shibatae).